Here is a 360-residue protein sequence, read N- to C-terminus: Phenylalanine--tRNA ligase alpha subunit (360 aa).

Glu-260 serves as a coordination point for Mg(2+).

This sequence belongs to the class-II aminoacyl-tRNA synthetase family. Phe-tRNA synthetase alpha subunit type 1 subfamily. Tetramer of two alpha and two beta subunits. Mg(2+) serves as cofactor.

It localises to the cytoplasm. The enzyme catalyses tRNA(Phe) + L-phenylalanine + ATP = L-phenylalanyl-tRNA(Phe) + AMP + diphosphate + H(+). The protein is Phenylalanine--tRNA ligase alpha subunit of Bradyrhizobium sp. (strain BTAi1 / ATCC BAA-1182).